The following is a 165-amino-acid chain: Crossover junction endodeoxyribonuclease RuvC (165 aa).

Residues Asp7, Glu67, and Asp140 contribute to the active site. Residues Asp7, Glu67, and Asp140 each coordinate Mg(2+).

The protein belongs to the RuvC family. As to quaternary structure, homodimer which binds Holliday junction (HJ) DNA. The HJ becomes 2-fold symmetrical on binding to RuvC with unstacked arms; it has a different conformation from HJ DNA in complex with RuvA. In the full resolvosome a probable DNA-RuvA(4)-RuvB(12)-RuvC(2) complex forms which resolves the HJ. It depends on Mg(2+) as a cofactor.

It is found in the cytoplasm. It catalyses the reaction Endonucleolytic cleavage at a junction such as a reciprocal single-stranded crossover between two homologous DNA duplexes (Holliday junction).. Functionally, the RuvA-RuvB-RuvC complex processes Holliday junction (HJ) DNA during genetic recombination and DNA repair. Endonuclease that resolves HJ intermediates. Cleaves cruciform DNA by making single-stranded nicks across the HJ at symmetrical positions within the homologous arms, yielding a 5'-phosphate and a 3'-hydroxyl group; requires a central core of homology in the junction. The consensus cleavage sequence is 5'-(A/T)TT(C/G)-3'. Cleavage occurs on the 3'-side of the TT dinucleotide at the point of strand exchange. HJ branch migration catalyzed by RuvA-RuvB allows RuvC to scan DNA until it finds its consensus sequence, where it cleaves and resolves the cruciform DNA. The sequence is that of Crossover junction endodeoxyribonuclease RuvC from Desulfitobacterium hafniense (strain DSM 10664 / DCB-2).